Consider the following 392-residue polypeptide: Phosphoglycerate kinase (392 aa).

Substrate-binding positions include 19–21 (DFN), R35, 58–61 (HMGR), R117, and R150. Residues K201, E323, and 349–352 (GGDS) contribute to the ATP site.

The protein belongs to the phosphoglycerate kinase family. Monomer.

The protein localises to the cytoplasm. The enzyme catalyses (2R)-3-phosphoglycerate + ATP = (2R)-3-phospho-glyceroyl phosphate + ADP. It participates in carbohydrate degradation; glycolysis; pyruvate from D-glyceraldehyde 3-phosphate: step 2/5. The sequence is that of Phosphoglycerate kinase from Desulfotalea psychrophila (strain LSv54 / DSM 12343).